The primary structure comprises 382 residues: 6-oxocyclohex-1-ene-1-carbonyl-CoA hydrolase (382 aa).

The protein belongs to the enoyl-CoA hydratase/isomerase family. Homohexamer.

It carries out the reaction 6-oxocyclohex-1-ene-1-carbonyl-CoA + 2 H2O = 3-hydroxy-6-carboxyhexanoyl-CoA + H(+). The protein operates within aromatic compound metabolism; benzoyl-CoA degradation. Its function is as follows. Involved in the central benzoyl-CoA catabolism. Catalyzes the addition of one molecule of water to the double bond and the hydrolytic cleavage of C-C bond in the alicyclic ring, 6-oxocyclohex-1-ene-1-carbonyl-CoA (6-OCH-CoA) to yield 3-hydroxypimelyl-CoA. The chain is 6-oxocyclohex-1-ene-1-carbonyl-CoA hydrolase from Syntrophus aciditrophicus (strain SB).